The following is a 460-amino-acid chain: NADH-ubiquinone oxidoreductase chain 4 (460 aa).

Helical transmembrane passes span 22 to 42, 61 to 81, 97 to 114, 118 to 140, 149 to 169, 196 to 216, 226 to 246, 259 to 279, 286 to 305, 309 to 331, 352 to 372, 395 to 415, and 437 to 457; these read WLWP…LSWL, PLST…ILAS, YISL…AFSA, IMFY…RWGN, TYFL…LLLL, IWWT…GVHL, PIAG…YGMM, LSYP…SICM, SLIA…GILI, WGFT…LFCL, MALP…LALP, IALT…MFLM, and LLIA…ELIW.

It belongs to the complex I subunit 4 family.

The protein localises to the mitochondrion membrane. It carries out the reaction a ubiquinone + NADH + 5 H(+)(in) = a ubiquinol + NAD(+) + 4 H(+)(out). Functionally, core subunit of the mitochondrial membrane respiratory chain NADH dehydrogenase (Complex I) that is believed to belong to the minimal assembly required for catalysis. Complex I functions in the transfer of electrons from NADH to the respiratory chain. The immediate electron acceptor for the enzyme is believed to be ubiquinone. In Tetraodon nigroviridis (Spotted green pufferfish), this protein is NADH-ubiquinone oxidoreductase chain 4 (MT-ND4).